Consider the following 71-residue polypeptide: uncharacterized protein (71 aa).

This is an uncharacterized protein from Thermoproteus tenax virus 1 (strain KRA1) (TTV1).